The following is a 1462-amino-acid chain: Glucosyltransferase-S (1462 aa).

Residues 35–164 (SSVSAETEQQ…RQTAAQENKN (130 aa)) form a disordered region. The segment covering 37–52 (VSAETEQQTSDKVVTQ) has biased composition (polar residues). The segment covering 71 to 85 (TKQAQTEQTQAQSQA) has biased composition (low complexity). Residues 86–108 (NVADTSTSITKETPSQNITTQAN) are compositionally biased toward polar residues. Positions 109–133 (SDDKTVTNTKSEEAQTSEERTKQAE) are enriched in basic and acidic residues. A compositionally biased stretch (low complexity) spans 134–149 (EAQATASSQALTQAKA). Residues 154–163 (QRQTAAQENK) show a composition bias toward polar residues. Cell wall-binding repeat units lie at residues 171–190 (IPNVKQIDGKYYYIGSDGQP), 192–211 (KNFALTVNNKVLYFDKNTGA), 1095–1115 (STGFVNDGNGMTFYSTSGYQA), 1116–1136 (KNSFVQDAKGNWYYFDNNGHM), 1137–1156 (VYGLQHLNGEVQYFLSNGVQ), 1180–1201 (SNGYYSFDNDSKWRYFDASGVM), 1202–1221 (AVGLKTINGNTQYFDQDGYQ), 1223–1244 (KGAWITGSDGKKRYFDDGSGNM), 1246–1266 (VNRFANDKNGDWYYLNSDGIA), 1267–1286 (LVGVQTINGKTYYFGQDGKQ), 1310–1330 (RNIFATDSQNNWYYFGSDGVA), 1331–1350 (VTGSQTIAGKKLYFASDGKQ), 1352–1372 (KGSFVTYNGKVHYYHADSGEL), and 1374–1394 (VNRFEADKDGNWYYLDSNGEA).

It belongs to the glycosyl hydrolase 70 family.

It localises to the secreted. It carries out the reaction [(1-&gt;6)-alpha-D-glucosyl](n) + sucrose = [(1-&gt;6)-alpha-D-glucosyl](n+1) + D-fructose. Functionally, production of extracellular glucans, that are thought to play a key role in the development of the dental plaque because of their ability to adhere to smooth surfaces and mediate the aggregation of bacterial cells and food debris. This Streptococcus mutans serotype c (strain ATCC 700610 / UA159) protein is Glucosyltransferase-S (gtfD).